The sequence spans 62 residues: UPF0434 protein RSc2531 (62 aa).

This sequence belongs to the UPF0434 family.

The chain is UPF0434 protein RSc2531 from Ralstonia nicotianae (strain ATCC BAA-1114 / GMI1000) (Ralstonia solanacearum).